Consider the following 203-residue polypeptide: Probable metallo-hydrolase MJ0296 (203 aa).

7 residues coordinate Zn(2+): histidine 86, histidine 88, aspartate 90, histidine 91, histidine 135, aspartate 152, and histidine 193.

This sequence belongs to the metallo-beta-lactamase superfamily. Zn(2+) is required as a cofactor.

This chain is Probable metallo-hydrolase MJ0296, found in Methanocaldococcus jannaschii (strain ATCC 43067 / DSM 2661 / JAL-1 / JCM 10045 / NBRC 100440) (Methanococcus jannaschii).